Reading from the N-terminus, the 425-residue chain is MPSISHPPSALRDFLRSEAAGGVILMAVAVLAMIVANSPLADSYFHLLHVQTGPVLSEKLGPMTPHLWINDALMAVFFLLVGLEIKREFVDGRLVTWQQRRLPFIAALGGMAAPALVFLAVTAQSSGLTQGWAIPAATDIAFAIGVMALLGSRVPTALKLFLTTVAIVDDMGAVVIIALAYTASIKGIALLAAAVILGAMMAMNRAGVRHLAPYLLGFVLLWFAVLVSGVHATIAGVLAAFTVPVVATPGAPDSPDSPLHRLEHALHPWSAFLIVPLFGFANAGISLEGFSLGSLLEPLPLGIAAGLFIGKQLGIFSLIWAAVKLGIAQRPRGSTWLQVYGLSVLCGIGFTMSLFIGMLAFASSPDLIEEAKLGVITGSLLSGVLGYLVLRFAPPAADAAQAETEIDREIEQDGDVEAIEGKLRQ.

11 consecutive transmembrane segments (helical) span residues 20–40 (AGGV…NSPL), 65–85 (PHLW…GLEI), 102–122 (LPFI…LAVT), 131–151 (GWAI…ALLG), 160–180 (LFLT…IALA), 183–203 (ASIK…MMAM), 218–238 (FVLL…AGVL), 272–292 (FLIV…GFSL), 303–323 (IAAG…WAAV), 342–362 (LSVL…LAFA), and 373–393 (LGVI…LRFA).

This sequence belongs to the NhaA Na(+)/H(+) (TC 2.A.33) antiporter family.

The protein resides in the cell inner membrane. It carries out the reaction Na(+)(in) + 2 H(+)(out) = Na(+)(out) + 2 H(+)(in). Its function is as follows. Na(+)/H(+) antiporter that extrudes sodium in exchange for external protons. The sequence is that of Na(+)/H(+) antiporter NhaA 1 from Novosphingobium aromaticivorans (strain ATCC 700278 / DSM 12444 / CCUG 56034 / CIP 105152 / NBRC 16084 / F199).